The following is a 232-amino-acid chain: Ubiquinone biosynthesis O-methyltransferase (232 aa).

Positions 36, 55, 76, and 120 each coordinate S-adenosyl-L-methionine.

Belongs to the methyltransferase superfamily. UbiG/COQ3 family.

It carries out the reaction a 3-demethylubiquinol + S-adenosyl-L-methionine = a ubiquinol + S-adenosyl-L-homocysteine + H(+). The catalysed reaction is a 3-(all-trans-polyprenyl)benzene-1,2-diol + S-adenosyl-L-methionine = a 2-methoxy-6-(all-trans-polyprenyl)phenol + S-adenosyl-L-homocysteine + H(+). Its pathway is cofactor biosynthesis; ubiquinone biosynthesis. Its function is as follows. O-methyltransferase that catalyzes the 2 O-methylation steps in the ubiquinone biosynthetic pathway. The sequence is that of Ubiquinone biosynthesis O-methyltransferase from Pseudomonas aeruginosa (strain LESB58).